A 478-amino-acid chain; its full sequence is Ribosomal RNA small subunit methyltransferase F (478 aa).

S-adenosyl-L-methionine-binding positions include 123 to 129 (AAAPGSK), Glu147, Asp174, and Asp192. Cys245 acts as the Nucleophile in catalysis.

It belongs to the class I-like SAM-binding methyltransferase superfamily. RsmB/NOP family.

It is found in the cytoplasm. The enzyme catalyses cytidine(1407) in 16S rRNA + S-adenosyl-L-methionine = 5-methylcytidine(1407) in 16S rRNA + S-adenosyl-L-homocysteine + H(+). Specifically methylates the cytosine at position 1407 (m5C1407) of 16S rRNA. This is Ribosomal RNA small subunit methyltransferase F from Vibrio campbellii (strain ATCC BAA-1116).